We begin with the raw amino-acid sequence, 233 residues long: Octanoyltransferase (233 aa).

One can recognise a BPL/LPL catalytic domain in the interval 34 to 212 (PDRPDVLLLL…AFAQTFELDL (179 aa)). Substrate contacts are provided by residues 76-83 (RGGEVTHH), 143-145 (AIG), and 156-158 (GFA). Residue cysteine 174 is the Acyl-thioester intermediate of the active site.

Belongs to the LipB family.

Its subcellular location is the cytoplasm. It catalyses the reaction octanoyl-[ACP] + L-lysyl-[protein] = N(6)-octanoyl-L-lysyl-[protein] + holo-[ACP] + H(+). It functions in the pathway protein modification; protein lipoylation via endogenous pathway; protein N(6)-(lipoyl)lysine from octanoyl-[acyl-carrier-protein]: step 1/2. Its function is as follows. Catalyzes the transfer of endogenously produced octanoic acid from octanoyl-acyl-carrier-protein onto the lipoyl domains of lipoate-dependent enzymes. Lipoyl-ACP can also act as a substrate although octanoyl-ACP is likely to be the physiological substrate. In Synechococcus elongatus (strain ATCC 33912 / PCC 7942 / FACHB-805) (Anacystis nidulans R2), this protein is Octanoyltransferase.